Reading from the N-terminus, the 323-residue chain is Galectin-4 (323 aa).

2 Galectin domains span residues 19 to 150 and 194 to 323; these read YYQP…INFI and YFGR…YVQI. An a beta-D-galactoside-binding site is contributed by 256 to 262; it reads WGSEEKK. Ser258 is subject to Phosphoserine.

As to quaternary structure, monomer.

Galectin that binds lactose and a related range of sugars. May be involved in the assembly of adherens junctions. In Homo sapiens (Human), this protein is Galectin-4 (LGALS4).